The chain runs to 103 residues: Large ribosomal subunit protein uL24 (103 aa).

Belongs to the universal ribosomal protein uL24 family. As to quaternary structure, part of the 50S ribosomal subunit.

Functionally, one of two assembly initiator proteins, it binds directly to the 5'-end of the 23S rRNA, where it nucleates assembly of the 50S subunit. One of the proteins that surrounds the polypeptide exit tunnel on the outside of the subunit. In Anoxybacillus flavithermus (strain DSM 21510 / WK1), this protein is Large ribosomal subunit protein uL24.